Here is a 461-residue protein sequence, read N- to C-terminus: Argininosuccinate lyase (461 aa).

This sequence belongs to the lyase 1 family. Argininosuccinate lyase subfamily.

It is found in the cytoplasm. The enzyme catalyses 2-(N(omega)-L-arginino)succinate = fumarate + L-arginine. It participates in amino-acid biosynthesis; L-arginine biosynthesis; L-arginine from L-ornithine and carbamoyl phosphate: step 3/3. This is Argininosuccinate lyase from Limosilactobacillus reuteri subsp. reuteri (strain JCM 1112) (Lactobacillus reuteri).